Consider the following 228-residue polypeptide: MAPPTAAPEPNTVPETSPTGHRMFSRIRLATPTDVPFIHKLIHQMAVFERLTHLFVATESGLASTLFNSRPFQAVTVFLLEISPSPFPTTHDASSPDFTPFLETHKVDLPIEDPDREKFLPDKLNDVVVAGFVLFFPNYPSFLAKQGFYIEDIFMREPYRRKGFGKLLLTAVAKQAVKLGVGRVEWIVIDWNVNAINFYEQMGAQVFKEWRLCRLTGDALQAIDKLNI.

Residues 1–21 (MAPPTAAPEPNTVPETSPTGH) are disordered. The N-acetyltransferase domain occupies 77 to 227 (VFLLEISPSP…DALQAIDKLN (151 aa)). Acetyl-CoA contacts are provided by residues 153–155 (IFM), 161–166 (RKGFGK), 192–195 (NVNA), and tyrosine 199.

This sequence belongs to the acetyltransferase family.

Functionally, acetyltransferase that converts ornithine to N5-acetylornithine, which is likely used in plant defense. This chain is L-ornithine N5-acetyltransferase NATA1 (NATA1), found in Arabidopsis thaliana (Mouse-ear cress).